A 332-amino-acid chain; its full sequence is uncharacterized protein (332 aa).

A disordered region spans residues E306–F332.

This is an uncharacterized protein from Homo sapiens (Human).